Reading from the N-terminus, the 269-residue chain is MGSIENPEIMASTMLHILPLAGKVYGITGGASGIGLATAQILSRRGATVCIADVDPKAMASAEVYFSGQSGAKYSITKVDISKRSEVNAWVDGIISQFGRLDGAANVAGVIGKIHGAVPVSEMDDDEWDKIVAVNLTGTMYCMRAQLRNIVDGGSIVNVASIHGLKGFANHAAYDASKHGVIGLTKAAAQENGAREIRVNAVAPGAIYTPLMQKNWDITGRPKDAPFDDPSAFRRQGTAMETGNVIAFLLGPDSTFVSGSVYSVDGAWI.

NADP(+) is bound by residues isoleucine 34, aspartate 80, arginine 144, tyrosine 174, lysine 178, isoleucine 207, and threonine 209. Tyrosine 174 functions as the Proton donor in the catalytic mechanism. The active-site Lowers pKa of active site Tyr is lysine 178.

This sequence belongs to the short-chain dehydrogenases/reductases (SDR) family.

It functions in the pathway hormone biosynthesis. Short-chain dehydrogenase/reductase involved in the biosynthesis of abscisic acid (ABA), a phytohormone that acts antagonistically toward salicylic acid (SA), jasmonic acid (JA) and ethylene (ETH) signaling, to impede plant defense responses. During pathogen-host interaction, ABA plays a dual role in disease severity by increasing plant susceptibility and accelerating pathogenesis in the fungus itself. The first step of the pathway catalyzes the reaction from farnesyl diphosphate to alpha-ionylideneethane performed by the alpha-ionylideneethane synthase ABA3 via a three-step reaction mechanism involving 2 neutral intermediates, beta-farnesene and allofarnesene. The cytochrome P450 monooxygenase ABA1 might then be involved in the conversion of alpha-ionylideneethane to alpha-ionylideneacetic acid. Alpha-ionylideneacetic acid is further converted to abscisic acid in 2 steps involving the cytochrome P450 monooxygenase ABA2 and the short-chain dehydrogenase/reductase ABA4, via the intermediates 1'-deoxy-ABA or 1',4'-trans-diol-ABA, depending on the order of action of these 2 enzymes. ABA2 is responsible for the hydroxylation of carbon atom C-1' and ABA4 might be involved in the oxidation of the C-4' carbon atom. The sequence is that of Short-chain dehydrogenase/reductase ABA4 (ABA4) from Pyricularia oryzae (strain Y34) (Rice blast fungus).